A 161-amino-acid polypeptide reads, in one-letter code: MAEEHRCETPEGHRLCVNNCGFFGSSATMNLCSNCYGDLCLKQQQQASMKSTVESSLSPVIAPVLENYAAELEIPTTKKTEEKKPIQIPTEQPSPPQRPNRCTVCRKRVGLTGFMCRCGTTFCGSHRYPEVHGCTFDFKSAGREEIAKANPLVIAAKLQKI.

Residues 10-44 (PEGHRLCVNNCGFFGSSATMNLCSNCYGDLCLKQQ) form an A20-type zinc finger. Zn(2+)-binding residues include Cys16, Cys20, Cys32, and Cys35. Over residues 76–85 (TTKKTEEKKP) the composition is skewed to basic and acidic residues. The tract at residues 76 to 99 (TTKKTEEKKPIQIPTEQPSPPQRP) is disordered. The AN1-type zinc finger occupies 96 to 142 (PQRPNRCTVCRKRVGLTGFMCRCGTTFCGSHRYPEVHGCTFDFKSAG). Zn(2+)-binding residues include Cys102, Cys105, Cys116, Cys118, Cys123, His126, His132, and Cys134.

In terms of biological role, may be involved in environmental stress response. The polypeptide is Zinc finger A20 and AN1 domain-containing stress-associated protein 4 (SAP4) (Arabidopsis thaliana (Mouse-ear cress)).